The sequence spans 93 residues: Small ribosomal subunit protein uS19 (93 aa).

It belongs to the universal ribosomal protein uS19 family.

Protein S19 forms a complex with S13 that binds strongly to the 16S ribosomal RNA. The polypeptide is Small ribosomal subunit protein uS19 (Cutibacterium acnes (strain DSM 16379 / KPA171202) (Propionibacterium acnes)).